Consider the following 172-residue polypeptide: Major exported protein (172 aa).

Belongs to the hcp1 family.

It is found in the secreted. The chain is Major exported protein (hcpA) from Pseudomonas aeruginosa (strain ATCC 15692 / DSM 22644 / CIP 104116 / JCM 14847 / LMG 12228 / 1C / PRS 101 / PAO1).